A 448-amino-acid polypeptide reads, in one-letter code: SVP1-like protein 2 (448 aa).

6 N-linked (GlcNAc...) asparagine glycosylation sites follow: asparagine 61, asparagine 155, asparagine 256, asparagine 280, asparagine 315, and asparagine 421. WD repeat units lie at residues 222 to 262 (AHKN…LIKE) and 267 to 306 (VDKA…NTET). A disordered region spans residues 416-435 (THYSLNESLRNEDTKSAGEP). Over residues 424–435 (LRNEDTKSAGEP) the composition is skewed to basic and acidic residues.

It belongs to the WD repeat PROPPIN family. N-glycosylated.

It is found in the endosome membrane. Its subcellular location is the prevacuolar compartment membrane. In terms of biological role, involved in piecemeal microautophagy of the nucleus (micronucleophagy). In Saccharomyces cerevisiae (strain ATCC 204508 / S288c) (Baker's yeast), this protein is SVP1-like protein 2 (HSV2).